Here is a 547-residue protein sequence, read N- to C-terminus: Chaperonin GroEL (547 aa).

Residues T30–P33, K51, D87–T91, G415, and D495 each bind ATP.

Belongs to the chaperonin (HSP60) family. As to quaternary structure, forms a cylinder of 14 subunits composed of two heptameric rings stacked back-to-back. Interacts with the co-chaperonin GroES.

It is found in the cytoplasm. It carries out the reaction ATP + H2O + a folded polypeptide = ADP + phosphate + an unfolded polypeptide.. Its function is as follows. Together with its co-chaperonin GroES, plays an essential role in assisting protein folding. The GroEL-GroES system forms a nano-cage that allows encapsulation of the non-native substrate proteins and provides a physical environment optimized to promote and accelerate protein folding. The sequence is that of Chaperonin GroEL from Bartonella quintana (strain Toulouse) (Rochalimaea quintana).